We begin with the raw amino-acid sequence, 282 residues long: 2-dehydro-3-deoxyphosphooctonate aldolase (282 aa).

The protein belongs to the KdsA family.

The protein resides in the cytoplasm. It carries out the reaction D-arabinose 5-phosphate + phosphoenolpyruvate + H2O = 3-deoxy-alpha-D-manno-2-octulosonate-8-phosphate + phosphate. Its pathway is carbohydrate biosynthesis; 3-deoxy-D-manno-octulosonate biosynthesis; 3-deoxy-D-manno-octulosonate from D-ribulose 5-phosphate: step 2/3. The protein operates within bacterial outer membrane biogenesis; lipopolysaccharide biosynthesis. The protein is 2-dehydro-3-deoxyphosphooctonate aldolase of Bordetella avium (strain 197N).